The sequence spans 296 residues: Putative thiosulfate sulfurtransferase SseA (296 aa).

2 consecutive Rhodanese domains span residues G31–L138 and I168–T286. Residue C245 is the Cysteine persulfide intermediate of the active site. R250 provides a ligand contact to substrate.

It carries out the reaction thiosulfate + hydrogen cyanide = thiocyanate + sulfite + 2 H(+). This is Putative thiosulfate sulfurtransferase SseA (sseA) from Mycobacterium leprae (strain TN).